Here is a 533-residue protein sequence, read N- to C-terminus: Phosphatidylinositol 4-kinase gamma 8 (533 aa).

Residues 101 to 397 form the PI3K/PI4K catalytic domain; that stretch reads GAQPLLLPSG…AVSGSDDDDD (297 aa). Residues 107–113 form a G-loop region; it reads LPSGLGG. ATP is bound by residues 108–114, K129, and 210–213; these read PSGLGGA and QRFV. The catalytic loop stretch occupies residues 243–251; the sequence is LNLDRHAGN. Positions 276–302 are activation loop; the sequence is PIDHGLCLPECLDDPYFEWLNWPQASV. D278 is an ATP binding site.

Belongs to the PI3/PI4-kinase family. Type II PI4K subfamily.

The catalysed reaction is a 1,2-diacyl-sn-glycero-3-phospho-(1D-myo-inositol) + ATP = a 1,2-diacyl-sn-glycero-3-phospho-(1D-myo-inositol 4-phosphate) + ADP + H(+). Its function is as follows. The phosphorylation of phosphatidylinositol (PI) to PI4P is the first committed step in the generation of phosphatidylinositol 4,5-bisphosphate (PIP2), a precursor of the second messenger inositol 1,4,5-trisphosphate (InsP3). The polypeptide is Phosphatidylinositol 4-kinase gamma 8 (PI4KG8) (Arabidopsis thaliana (Mouse-ear cress)).